The following is a 102-amino-acid chain: Cytochrome c oxidase subunit 6a, mitochondrial (102 aa).

A mitochondrion-targeting transit peptide spans 1–36; it reads MATAIVRSALSRAVTRAAPKTSVAPKRNFSSSAGHD.

This sequence belongs to the cytochrome c oxidase subunit 6A (TC 3.D.4.11) family.

The protein localises to the mitochondrion inner membrane. In terms of biological role, this protein is one of the nuclear-coded polypeptide chains of cytochrome c oxidase, the terminal oxidase in mitochondrial electron transport. The protein is Cytochrome c oxidase subunit 6a, mitochondrial (COX6A) of Arabidopsis thaliana (Mouse-ear cress).